The chain runs to 302 residues: Giardin subunit alpha-5 (302 aa).

Annexin repeat units follow at residues 1 to 72 (MTST…VNMW), 74 to 144 (SRHE…VAGW), 153 to 226 (GSVE…AAHF), and 230 to 298 (GLPV…TLWR).

It belongs to the annexin family. Giardin subunit alpha subfamily.

The protein resides in the cytoplasm. The protein localises to the cytoskeleton. In terms of biological role, giardins are involved in parasite attachment to the intestinal mucosa and in the cytoskeletal disassembly and reassembly that marks the transition from infectious trophozoite to transmissible cyst. They may interact with other cytoskeletal proteins such as microtubules in the microribbons or crossbridges, to maintain the integrity of the ventral disk. The chain is Giardin subunit alpha-5 from Giardia intestinalis (Giardia lamblia).